A 756-amino-acid polypeptide reads, in one-letter code: MTENSVVEVDEGVFESTAVIDNGSFGTRTIRFETGRLAQQAAGAVVAYLDDETMLLSATSASKHPKEHFDFFPLTVDVEERMYAAGRIPGSFFRREGRPSTDAILTCRLIDRPLRPSFVDGLRNEIQVVVTVMSLNPQDLYDVVAINAASASTQIAGLPFSGPVGGVRVALIVSEDNKAGQWVAFPTVDQLENAVFDMVVAGRVVSGSGDNADVAIMMVEAEATDNVIAKIADGAQAPTEAIVAEGLEAAKPFIARLCAAQAALASKAAKPTGDYPVFPAYQDDVFAAVEAAASEKLNAALTIAGKQERDDKTDEVKVEVLEQVAPNFEGREKELGAAFRSLTKKLVRQRILRDQFRIDGRGVTDIRSLSAEVAIIPRAHGSALFERGETQILGVTTLDMVKMAQQVDSLGPETTKRYMHHYNFPPYSTGETGRVGSPKRREIGHGALAERALMPVLPSVEEFPYAIRQVSEALSSNGSTSMGSVCASTLALLNAGVPLRAPVAGIAMGLVSDQVDGETRYVALTDILGAEDAFGDMDFKVAGTKDFVTALQLDTKLDGIPSQVLAGALSQAKDARTTILEVMAEAIDTPDEMSPFAPRVTAIKVPVDKIGEVIGPKGKMINSITEQTGANISIEDDGTVFVGATDGPSAQAAIDMINAIANPQLPKVGERFLGTVVKTTAFGAFVSLLPGRDGLVHISKLGSGKRIAKVEDVVNVGSKIRVEIADIDARGKISLIPVEEGNDEAAAPAADEAASE.

Positions 532 and 538 each coordinate Mg(2+). One can recognise a KH domain in the interval 598–657 (PRVTAIKVPVDKIGEVIGPKGKMINSITEQTGANISIEDDGTVFVGATDGPSAQAAIDMI). Positions 669–738 (GERFLGTVVK…ARGKISLIPV (70 aa)) constitute an S1 motif domain.

The protein belongs to the polyribonucleotide nucleotidyltransferase family. Mg(2+) is required as a cofactor.

The protein resides in the cytoplasm. The catalysed reaction is RNA(n+1) + phosphate = RNA(n) + a ribonucleoside 5'-diphosphate. Functionally, involved in mRNA degradation. Catalyzes the phosphorolysis of single-stranded polyribonucleotides processively in the 3'- to 5'-direction. The polypeptide is Polyribonucleotide nucleotidyltransferase (Rhodococcus erythropolis (strain PR4 / NBRC 100887)).